Consider the following 561-residue polypeptide: Putative transport protein YbjL (561 aa).

5 helical membrane passes run 8 to 28, 32 to 52, 66 to 86, 94 to 114, and 158 to 178; these read LLNGNYILLLFVVLTLGLCLG, LGSIQLGNSIGVLVVSLLLGQ, FMLFIFCVGVEAGPNFFSIFF, MLALVMVGSALVIALGLGKLF, and NLSLGYALTYLIGLVSLIVGA. 2 consecutive RCK C-terminal domains span residues 200-288 and 292-373; these read RGLD…SFRN and VFDR…RIGF. 5 consecutive transmembrane segments (helical) span residues 383–403, 406–426, 451–471, 475–495, and 540–560; these read LLAFCAFFVIGLMIGMITFQF, FSFGMGNAAGLLFAGIMLGFM, VFMAGVGLSAGSGINNGLGAI, MLIAGLIVSLVPVVICFLFGA, and AIANVLLTLAGTIIVMVWPGL.

It belongs to the AAE transporter (TC 2.A.81) family. YbjL subfamily.

It is found in the cell membrane. The protein is Putative transport protein YbjL of Shigella sonnei (strain Ss046).